Consider the following 112-residue polypeptide: Putative membrane protein insertion efficiency factor (112 aa).

Belongs to the UPF0161 family.

The protein resides in the cell inner membrane. Could be involved in insertion of integral membrane proteins into the membrane. The polypeptide is Putative membrane protein insertion efficiency factor (Bradyrhizobium diazoefficiens (strain JCM 10833 / BCRC 13528 / IAM 13628 / NBRC 14792 / USDA 110)).